A 530-amino-acid polypeptide reads, in one-letter code: UDP-glucuronosyltransferase 1A10 (530 aa).

The N-terminal stretch at 1–25 (MARAGWTSPVPLCVCLLLTCGFAEA) is a signal peptide. N-linked (GlcNAc...) asparagine glycosylation is found at N71, N292, and N344. Residues 488–504 (VIGFLLAVVLTVAFITF) form a helical membrane-spanning segment.

It belongs to the UDP-glycosyltransferase family. In terms of assembly, homodimer. Homooligomer. Interacts with UGT1A1, UGT1A3, UGT1A4, UGT1A6, UGT1A7, UGT1A8 and UGT1A9 to form heterodimers. Isoform 1 interacts with isoform 2/i2 suggesting that oligomerization is involved in negative regulation of transferase activity by isoform 2. Isoform 1 also interacts with respective i2 isoforms of UGT1A1, UGT1A3, UGT1A4, UGT1A6, UGT1A7, UGT1A8 and UGT1A9. In terms of tissue distribution, liver and colon. Isoform 1 and isoform 2 are expressed in colon, esophagus and small intestine; isoform 2 but not isoform 1 is expressed in liver or kidney.

It localises to the endoplasmic reticulum membrane. It catalyses the reaction glucuronate acceptor + UDP-alpha-D-glucuronate = acceptor beta-D-glucuronoside + UDP + H(+). The catalysed reaction is 17beta-estradiol + UDP-alpha-D-glucuronate = 17beta-estradiol 3-O-(beta-D-glucuronate) + UDP + H(+). It carries out the reaction 17beta-estradiol + UDP-alpha-D-glucuronate = 17beta-estradiol 17-O-(beta-D-glucuronate) + UDP + H(+). The enzyme catalyses 17alpha-estradiol + UDP-alpha-D-glucuronate = 17alpha-estradiol 3-O-(beta-D-glucuronate) + UDP + H(+). It catalyses the reaction 16alpha,17beta-estriol + UDP-alpha-D-glucuronate = 16alpha,17beta-estriol 3-O-(beta-D-glucuronate) + UDP + H(+). The catalysed reaction is 16beta,17beta-estriol + UDP-alpha-D-glucuronate = 16beta,17beta-estriol 3-O-(beta-D-glucuronate) + UDP + H(+). It carries out the reaction 16alpha,17alpha-estriol + UDP-alpha-D-glucuronate = 16alpha,17alpha-estriol 3-O-(beta-D-glucuronate) + UDP + H(+). The enzyme catalyses 16alpha-hydroxyestrone + UDP-alpha-D-glucuronate = 16alpha-hydroxyestrone 3-O-(beta-D-glucuronate) + UDP + H(+). It catalyses the reaction estrone + UDP-alpha-D-glucuronate = estrone 3-O-(beta-D-glucuronate) + UDP + H(+). The catalysed reaction is prunetin + UDP-alpha-D-glucuronate = prunetin-4'-O-beta-D-glucuronide + UDP. It carries out the reaction (5Z,8Z,11Z,14Z)-eicosatetraenoate + UDP-alpha-D-glucuronate = O-[(5Z),(8Z),(11Z),(14Z)-eicosatetraenoyl]-beta-D-glucuronate + UDP. The enzyme catalyses 15-hydroxy-(5Z,8Z,11Z,13E)-eicosatetraenoate + UDP-alpha-D-glucuronate = 15-O-(beta-D-glucuronosyl)-(5Z,8Z,11Z,14Z)-eicosatetraenoate + UDP + H(+). It catalyses the reaction prostaglandin B1 + UDP-alpha-D-glucuronate = 15-O-(beta-D-glucuronosyl)-prostaglandin B1 + UDP + H(+). The catalysed reaction is (E)-ferulate + UDP-alpha-D-glucuronate = (E)-4-O-(beta-D-glucuronosyl)-ferulate + UDP + H(+). It carries out the reaction (E)-ferulate + UDP-alpha-D-glucuronate = (E)-ferulic acid beta-D-glucuronate ester + UDP. The enzyme catalyses losartan + UDP-alpha-D-glucuronate = losartan-2-N-beta-D-glucuronide + UDP. It catalyses the reaction candesartan + UDP-alpha-D-glucuronate = candesartan O-beta-D-glucuronoside + UDP. The catalysed reaction is candesartan + UDP-alpha-D-glucuronate = candesartan-2-N-beta-D-glucuronide + UDP. It carries out the reaction zolasartan + UDP-alpha-D-glucuronate = zolarsartan-1-N-beta-D-glucuronide + UDP. Its function is as follows. UDP-glucuronosyltransferase (UGT) that catalyzes phase II biotransformation reactions in which lipophilic substrates are conjugated with glucuronic acid to increase the metabolite's water solubility, thereby facilitating excretion into either the urine or bile. Essential for the elimination and detoxification of drugs, xenobiotics and endogenous compounds. Catalyzes the glucuronidation of endogenous estrogen hormones such as estradiol, estrone and estriol. Involved in the glucuronidation of arachidonic acid (AA) and AA-derived eicosanoids including 15-HETE and PGB1. Involved in the glucuronidation of the phytochemical ferulic acid at the phenolic or the carboxylic acid group. Also catalyzes the glucuronidation of the isoflavones genistein, daidzein, glycitein, formononetin, biochanin A and prunetin, which are phytoestrogens with anticancer and cardiovascular properties. Involved in the glucuronidation of the AGTR1 angiotensin receptor antagonist losartan, caderastan and zolarsatan, drugs which can inhibit the effect of angiotensin II. Lacks UGT glucuronidation activity but acts as a negative regulator of isoform 1. This chain is UDP-glucuronosyltransferase 1A10, found in Homo sapiens (Human).